A 97-amino-acid polypeptide reads, in one-letter code: Putative septation protein SpoVG (97 aa).

Belongs to the SpoVG family.

Its function is as follows. Could be involved in septation. The chain is Putative septation protein SpoVG from Anaeromyxobacter sp. (strain Fw109-5).